A 450-amino-acid chain; its full sequence is Glucose-6-phosphate isomerase (450 aa).

Threonine 39 is modified (phosphothreonine). Glutamate 291 (proton donor) is an active-site residue. Residues histidine 312 and lysine 426 contribute to the active site.

The protein belongs to the GPI family.

It is found in the cytoplasm. It carries out the reaction alpha-D-glucose 6-phosphate = beta-D-fructose 6-phosphate. Its pathway is carbohydrate biosynthesis; gluconeogenesis. It participates in carbohydrate degradation; glycolysis; D-glyceraldehyde 3-phosphate and glycerone phosphate from D-glucose: step 2/4. Catalyzes the reversible isomerization of glucose-6-phosphate to fructose-6-phosphate. In Bacillus mycoides (strain KBAB4) (Bacillus weihenstephanensis), this protein is Glucose-6-phosphate isomerase.